Reading from the N-terminus, the 55-residue chain is ATP synthase F(0) complex subunit 8 (55 aa).

Residues 10 to 32 traverse the membrane as a helical segment; the sequence is FFTMLTTWLTFLLLIQPKLLSFI.

It belongs to the ATPase protein 8 family. Component of the ATP synthase complex composed at least of ATP5F1A/subunit alpha, ATP5F1B/subunit beta, ATP5MC1/subunit c (homooctomer), MT-ATP6/subunit a, MT-ATP8/subunit 8, ATP5ME/subunit e, ATP5MF/subunit f, ATP5MG/subunit g, ATP5MK/subunit k, ATP5MJ/subunit j, ATP5F1C/subunit gamma, ATP5F1D/subunit delta, ATP5F1E/subunit epsilon, ATP5PF/subunit F6, ATP5PB/subunit b, ATP5PD/subunit d, ATP5PO/subunit OSCP. ATP synthase complex consists of a soluble F(1) head domain (subunits alpha(3) and beta(3)) - the catalytic core - and a membrane F(0) domain - the membrane proton channel (subunits c, a, 8, e, f, g, k and j). These two domains are linked by a central stalk (subunits gamma, delta, and epsilon) rotating inside the F1 region and a stationary peripheral stalk (subunits F6, b, d, and OSCP).

The protein resides in the mitochondrion membrane. In terms of biological role, subunit 8, of the mitochondrial membrane ATP synthase complex (F(1)F(0) ATP synthase or Complex V) that produces ATP from ADP in the presence of a proton gradient across the membrane which is generated by electron transport complexes of the respiratory chain. ATP synthase complex consist of a soluble F(1) head domain - the catalytic core - and a membrane F(1) domain - the membrane proton channel. These two domains are linked by a central stalk rotating inside the F(1) region and a stationary peripheral stalk. During catalysis, ATP synthesis in the catalytic domain of F(1) is coupled via a rotary mechanism of the central stalk subunits to proton translocation. In vivo, can only synthesize ATP although its ATP hydrolase activity can be activated artificially in vitro. Part of the complex F(0) domain. The chain is ATP synthase F(0) complex subunit 8 from Guira guira (Guira cuckoo).